We begin with the raw amino-acid sequence, 484 residues long: UDP-N-acetylmuramoyl-L-alanyl-D-glutamate--2,6-diaminopimelate ligase (484 aa).

S30 contacts UDP-N-acetyl-alpha-D-muramoyl-L-alanyl-D-glutamate. 109 to 115 (GTNGKTS) lines the ATP pocket. Residues 151–152 (TT), S178, and R186 each bind UDP-N-acetyl-alpha-D-muramoyl-L-alanyl-D-glutamate. An N6-carboxylysine modification is found at K218. Meso-2,6-diaminopimelate is bound by residues R379, 403–406 (DNPR), G455, and E459. Positions 403 to 406 (DNPR) match the Meso-diaminopimelate recognition motif motif.

Belongs to the MurCDEF family. MurE subfamily. Mg(2+) serves as cofactor. Post-translationally, carboxylation is probably crucial for Mg(2+) binding and, consequently, for the gamma-phosphate positioning of ATP.

The protein resides in the cytoplasm. The catalysed reaction is UDP-N-acetyl-alpha-D-muramoyl-L-alanyl-D-glutamate + meso-2,6-diaminopimelate + ATP = UDP-N-acetyl-alpha-D-muramoyl-L-alanyl-gamma-D-glutamyl-meso-2,6-diaminopimelate + ADP + phosphate + H(+). The protein operates within cell wall biogenesis; peptidoglycan biosynthesis. In terms of biological role, catalyzes the addition of meso-diaminopimelic acid to the nucleotide precursor UDP-N-acetylmuramoyl-L-alanyl-D-glutamate (UMAG) in the biosynthesis of bacterial cell-wall peptidoglycan. The polypeptide is UDP-N-acetylmuramoyl-L-alanyl-D-glutamate--2,6-diaminopimelate ligase (Clostridioides difficile (strain 630) (Peptoclostridium difficile)).